A 208-amino-acid polypeptide reads, in one-letter code: Probable nicotinate-nucleotide adenylyltransferase (208 aa).

This sequence belongs to the NadD family.

It carries out the reaction nicotinate beta-D-ribonucleotide + ATP + H(+) = deamido-NAD(+) + diphosphate. It participates in cofactor biosynthesis; NAD(+) biosynthesis; deamido-NAD(+) from nicotinate D-ribonucleotide: step 1/1. Catalyzes the reversible adenylation of nicotinate mononucleotide (NaMN) to nicotinic acid adenine dinucleotide (NaAD). In Kineococcus radiotolerans (strain ATCC BAA-149 / DSM 14245 / SRS30216), this protein is Probable nicotinate-nucleotide adenylyltransferase.